We begin with the raw amino-acid sequence, 338 residues long: Probable replication factor C subunit 2 (338 aa).

60 to 67 (GPPGTGKT) provides a ligand contact to ATP.

It belongs to the activator 1 small subunits family. In terms of assembly, heteropentamer of various rfc subunits that forms a complex (RFC) with PCNA in the presence of ATP.

The protein localises to the nucleus. Functionally, the elongation of primed DNA templates by DNA polymerase delta and epsilon requires the action of the accessory proteins PCNA and activator 1. The chain is Probable replication factor C subunit 2 (rfc2) from Dictyostelium discoideum (Social amoeba).